The chain runs to 420 residues: Exodeoxyribonuclease 7 large subunit (420 aa).

It belongs to the XseA family. In terms of assembly, heterooligomer composed of large and small subunits.

The protein resides in the cytoplasm. The catalysed reaction is Exonucleolytic cleavage in either 5'- to 3'- or 3'- to 5'-direction to yield nucleoside 5'-phosphates.. Bidirectionally degrades single-stranded DNA into large acid-insoluble oligonucleotides, which are then degraded further into small acid-soluble oligonucleotides. The protein is Exodeoxyribonuclease 7 large subunit of Helicobacter pylori (strain P12).